A 189-amino-acid polypeptide reads, in one-letter code: Phosphoheptose isomerase (189 aa).

One can recognise an SIS domain in the interval 34-189 (LADSLAGGRK…CDLVEKRLFP (156 aa)). Residue 49 to 51 (NGG) coordinates substrate. The Zn(2+) site is built by histidine 58 and glutamate 62. Substrate is bound by residues glutamate 62, 91–92 (ND), 117–119 (STS), serine 122, and glutamine 169. Zn(2+) is bound by residues glutamine 169 and histidine 177.

Belongs to the SIS family. GmhA subfamily. In terms of assembly, homotetramer. It depends on Zn(2+) as a cofactor.

It localises to the cytoplasm. The catalysed reaction is 2 D-sedoheptulose 7-phosphate = D-glycero-alpha-D-manno-heptose 7-phosphate + D-glycero-beta-D-manno-heptose 7-phosphate. It participates in carbohydrate biosynthesis; D-glycero-D-manno-heptose 7-phosphate biosynthesis; D-glycero-alpha-D-manno-heptose 7-phosphate and D-glycero-beta-D-manno-heptose 7-phosphate from sedoheptulose 7-phosphate: step 1/1. Its function is as follows. Catalyzes the isomerization of sedoheptulose 7-phosphate in D-glycero-D-manno-heptose 7-phosphate. The protein is Phosphoheptose isomerase of Geobacter sulfurreducens (strain ATCC 51573 / DSM 12127 / PCA).